A 193-amino-acid polypeptide reads, in one-letter code: dCTP deaminase (193 aa).

Residues 110–115 (RSSLAR), Asp128, 136–138 (VLE), Tyr171, Lys178, and Gln182 contribute to the dCTP site. Glu138 acts as the Proton donor/acceptor in catalysis. A disordered region spans residues 169–193 (RPYNSRQDAKYRDQQGAVASRIDKD).

This sequence belongs to the dCTP deaminase family. In terms of assembly, homotrimer.

It carries out the reaction dCTP + H2O + H(+) = dUTP + NH4(+). The protein operates within pyrimidine metabolism; dUMP biosynthesis; dUMP from dCTP (dUTP route): step 1/2. Catalyzes the deamination of dCTP to dUTP. The chain is dCTP deaminase from Serratia proteamaculans (strain 568).